The primary structure comprises 218 residues: Putative pre-16S rRNA nuclease (218 aa).

Belongs to the YqgF nuclease family.

It localises to the cytoplasm. Functionally, could be a nuclease involved in processing of the 5'-end of pre-16S rRNA. The sequence is that of Putative pre-16S rRNA nuclease from Thermotoga maritima (strain ATCC 43589 / DSM 3109 / JCM 10099 / NBRC 100826 / MSB8).